The following is a 143-amino-acid chain: Large ribosomal subunit protein uL11 (143 aa).

The protein belongs to the universal ribosomal protein uL11 family. In terms of assembly, part of the ribosomal stalk of the 50S ribosomal subunit. Interacts with L10 and the large rRNA to form the base of the stalk. L10 forms an elongated spine to which L12 dimers bind in a sequential fashion forming a multimeric L10(L12)X complex. Post-translationally, one or more lysine residues are methylated.

Forms part of the ribosomal stalk which helps the ribosome interact with GTP-bound translation factors. The protein is Large ribosomal subunit protein uL11 of Halorhodospira halophila (strain DSM 244 / SL1) (Ectothiorhodospira halophila (strain DSM 244 / SL1)).